A 381-amino-acid polypeptide reads, in one-letter code: ATP-dependent (S)-NAD(P)H-hydrate dehydratase (381 aa).

A YjeF C-terminal domain is found at 84–376 (AEAVVRRITP…EFLGKSLEDI (293 aa)). (6S)-NADPHX is bound by residues Gly197 and 250–256 (NVYEYKR). ATP-binding positions include 290–294 (KGKAD) and 309–318 (GSPRRCGGQG). Residue Asp319 coordinates (6S)-NADPHX.

Belongs to the NnrD/CARKD family. It depends on Mg(2+) as a cofactor.

The enzyme catalyses (6S)-NADHX + ATP = ADP + phosphate + NADH + H(+). It catalyses the reaction (6S)-NADPHX + ATP = ADP + phosphate + NADPH + H(+). Catalyzes the dehydration of the S-form of NAD(P)HX at the expense of ATP, which is converted to ADP. Together with NAD(P)HX epimerase, which catalyzes the epimerization of the S- and R-forms, the enzyme allows the repair of both epimers of NAD(P)HX, a damaged form of NAD(P)H that is a result of enzymatic or heat-dependent hydration. The chain is ATP-dependent (S)-NAD(P)H-hydrate dehydratase from Sorghum bicolor (Sorghum).